An 877-amino-acid chain; its full sequence is DNA polymerase I (877 aa).

Residues 180-272 form the 5'-3' exonuclease domain; the sequence is TPSQFIDLKA…GLEDTLLKEK (93 aa). In terms of domain architecture, 3'-5' exonuclease spans 312 to 468; it reads FEIVTDKSSV…AKEKMMAELI (157 aa).

It belongs to the DNA polymerase type-A family. As to quaternary structure, single-chain monomer with multiple functions.

The enzyme catalyses DNA(n) + a 2'-deoxyribonucleoside 5'-triphosphate = DNA(n+1) + diphosphate. In addition to polymerase activity, this DNA polymerase exhibits 3'-5' and 5'-3' exonuclease activity. This is DNA polymerase I (polA) from Lactococcus lactis subsp. cremoris (strain MG1363).